Consider the following 547-residue polypeptide: Chaperonin GroEL (547 aa).

Residues 30 to 33 (TLGP), Lys-51, 87 to 91 (DGTTT), Gly-415, and Asp-496 contribute to the ATP site. The interval 528 to 547 (KGGGAPAGGGMPGGMGDMDF) is disordered.

It belongs to the chaperonin (HSP60) family. Forms a cylinder of 14 subunits composed of two heptameric rings stacked back-to-back. Interacts with the co-chaperonin GroES.

The protein resides in the cytoplasm. The catalysed reaction is ATP + H2O + a folded polypeptide = ADP + phosphate + an unfolded polypeptide.. Together with its co-chaperonin GroES, plays an essential role in assisting protein folding. The GroEL-GroES system forms a nano-cage that allows encapsulation of the non-native substrate proteins and provides a physical environment optimized to promote and accelerate protein folding. This chain is Chaperonin GroEL, found in Caulobacter vibrioides (strain ATCC 19089 / CIP 103742 / CB 15) (Caulobacter crescentus).